Reading from the N-terminus, the 232-residue chain is 2-C-methyl-D-erythritol 4-phosphate cytidylyltransferase (232 aa).

It belongs to the IspD/TarI cytidylyltransferase family. IspD subfamily.

The enzyme catalyses 2-C-methyl-D-erythritol 4-phosphate + CTP + H(+) = 4-CDP-2-C-methyl-D-erythritol + diphosphate. Its pathway is isoprenoid biosynthesis; isopentenyl diphosphate biosynthesis via DXP pathway; isopentenyl diphosphate from 1-deoxy-D-xylulose 5-phosphate: step 2/6. Catalyzes the formation of 4-diphosphocytidyl-2-C-methyl-D-erythritol from CTP and 2-C-methyl-D-erythritol 4-phosphate (MEP). The protein is 2-C-methyl-D-erythritol 4-phosphate cytidylyltransferase of Bacillus velezensis (strain DSM 23117 / BGSC 10A6 / LMG 26770 / FZB42) (Bacillus amyloliquefaciens subsp. plantarum).